The following is a 399-amino-acid chain: S-adenosylmethionine synthase (399 aa).

Residue H15 participates in ATP binding. D17 serves as a coordination point for Mg(2+). A K(+)-binding site is contributed by E43. L-methionine is bound by residues E56 and Q99. The tract at residues 99-109 (QSPDIARGVNR) is flexible loop. ATP-binding positions include 166 to 168 (DAK), 232 to 233 (RF), D241, 247 to 248 (RK), A264, and K268. D241 is an L-methionine binding site. Residue K272 participates in L-methionine binding.

The protein belongs to the AdoMet synthase family. As to quaternary structure, homotetramer; dimer of dimers. It depends on Mg(2+) as a cofactor. K(+) is required as a cofactor.

It localises to the cytoplasm. It catalyses the reaction L-methionine + ATP + H2O = S-adenosyl-L-methionine + phosphate + diphosphate. It functions in the pathway amino-acid biosynthesis; S-adenosyl-L-methionine biosynthesis; S-adenosyl-L-methionine from L-methionine: step 1/1. Functionally, catalyzes the formation of S-adenosylmethionine (AdoMet) from methionine and ATP. The overall synthetic reaction is composed of two sequential steps, AdoMet formation and the subsequent tripolyphosphate hydrolysis which occurs prior to release of AdoMet from the enzyme. This is S-adenosylmethionine synthase from Nitrosospira multiformis (strain ATCC 25196 / NCIMB 11849 / C 71).